The chain runs to 496 residues: MNSLSLVFWSILAVVGLLLFIKFKPPTIASLLLSKDEAKEISIQFIKEFVGIDVENWDFYSVYWYDHDTVNKLHHLGILKKNRKVLYDVGLVESWRVRFVHQNQSFVVGVNANREITFFYADVPKKTLSGKFEQVSPETLKQRLMASPDGLWSRANMTGTGKKEEDFREVSTYWYIAEAGDIRLKVTVELQGGRISYIGTEQEILTDQMSKVIRDEQVESTFGVSGMLGSALAMILAILILVFMDVQTSIIFSLVLGLLIIICQSLTLKEDIQLTIVNAYDARMSVKTVSLLGILSTLLTGLLTGFVVFICSLAGNALAGDFGWKTFEQPIVQIFYGIGAGLISLGVTSLLFNLLEKKQYLRISPELSNRTVFLSGFTFRQGLNMSIQSSIGEEVIYRLLMIPVIWWMSGNILISIIVSSFLWAVMHQVTGYDPRWIRWLHLFIFGCFLGVLFIKFGFICVLVAHFIHNLVLVCMPLWQFKLQKHMHHDQPKHTSL.

7 helical membrane-spanning segments follow: residues 1–21 (MNSLSLVFWSILAVVGLLLFI), 224–244 (VSGMLGSALAMILAILILVFM), 248–268 (TSIIFSLVLGLLIIICQSLTL), 291–311 (LLGILSTLLTGLLTGFVVFIC), 331–351 (IVQIFYGIGAGLISLGVTSLL), 399–419 (LLMIPVIWWMSGNILISIIVS), and 443–463 (FIFGCFLGVLFIKFGFICVLV).

It localises to the membrane. Required for production of the bacteriocin SkfA. The polypeptide is Sporulation-killing factor biosynthesis protein SkfC (Bacillus subtilis (strain 168)).